The sequence spans 156 residues: Small ribosomal subunit protein uS7 (156 aa).

As to quaternary structure, part of the 30S ribosomal subunit. Contacts proteins S9 and S11. Binds to the C-terminus of IF3 and to the C-terminus of Era.

One of the primary rRNA binding proteins, it binds directly to 3'-end of the 16S rRNA where it nucleates assembly of the head domain of the 30S subunit. Is located at the subunit interface close to the decoding center. Binds mRNA and the E site tRNA blocking its exit path in the ribosome. This blockage implies that this section of the ribosome must be able to move to release the deacetylated tRNA. This chain is Small ribosomal subunit protein uS7 (rpsG), found in Thermus thermophilus (strain ATCC 27634 / DSM 579 / HB8).